Here is a 425-residue protein sequence, read N- to C-terminus: Gamma-glutamyl phosphate reductase (425 aa).

The protein belongs to the gamma-glutamyl phosphate reductase family.

It is found in the cytoplasm. The catalysed reaction is L-glutamate 5-semialdehyde + phosphate + NADP(+) = L-glutamyl 5-phosphate + NADPH + H(+). The protein operates within amino-acid biosynthesis; L-proline biosynthesis; L-glutamate 5-semialdehyde from L-glutamate: step 2/2. Functionally, catalyzes the NADPH-dependent reduction of L-glutamate 5-phosphate into L-glutamate 5-semialdehyde and phosphate. The product spontaneously undergoes cyclization to form 1-pyrroline-5-carboxylate. This chain is Gamma-glutamyl phosphate reductase, found in Xylella fastidiosa (strain M23).